The sequence spans 491 residues: Cytochrome P450 2K3 (491 aa).

Cys434 is a heme binding site.

Belongs to the cytochrome P450 family. The cofactor is heme.

The protein resides in the endoplasmic reticulum membrane. It localises to the microsome membrane. The enzyme catalyses an organic molecule + reduced [NADPH--hemoprotein reductase] + O2 = an alcohol + oxidized [NADPH--hemoprotein reductase] + H2O + H(+). This Oncorhynchus mykiss (Rainbow trout) protein is Cytochrome P450 2K3 (cyp2k3).